Reading from the N-terminus, the 130-residue chain is MSTLVSLPGATPVAAPDYQSLERPLNFTESAAAKVKSLIQEEGNLDLALRVYIEGGGCSGFQYGFEFDENRAEDDLAVQTSGVTLLVDPLSLQYLMGAEVDYTESLTGAQFVIRNPNAKTTCGCGSSFSM.

Iron-sulfur cluster-binding residues include Cys-58, Cys-122, and Cys-124.

Belongs to the HesB/IscA family. In terms of assembly, homodimer. Iron-sulfur cluster is required as a cofactor.

Its function is as follows. Required for insertion of 4Fe-4S clusters for at least IspG. In Stenotrophomonas maltophilia (strain R551-3), this protein is Iron-sulfur cluster insertion protein ErpA.